Consider the following 329-residue polypeptide: MIRNSDYNSFVCCAVCNKIIPPAPFGKTFKRIHEYKPLKTRFYTHKDILDIGANILKKEEKFQEDILRERIAKAEAEVWAQANERQKQAVEKALEEANDRHKIEIQILKEEHQKDLQEVTAKTKTEMYQNMDDEMKREHLAAEQRMVHRIQRIMMECHREKVEAVEKARAEERLIAQKAIQAQKSKATEEIVNTGITVTKDEKTSVARLMREKEHEMNVLYGIAQRQKQEEVQEVLQEAEKTHQATLGNVMDTLANTQGELLSIAKQLGIMTNWKDFLEEELQETRMAFQKYINYTFPKLSPGHADFILPERKKTPSNLVIEENKTTLD.

Coiled-coil stretches lie at residues 57–119 and 224–250; these read KKEE…LQEV and AQRQKQEEVQEVLQEAEKTHQATLGNV.

This is an uncharacterized protein from Macaca fascicularis (Crab-eating macaque).